A 775-amino-acid chain; its full sequence is Phosphoribosylformylglycinamidine synthase subunit PurL (775 aa).

H81 is an active-site residue. ATP contacts are provided by Y84 and K123. A Mg(2+)-binding site is contributed by E125. Residues 126–129 (SHNH) and R148 contribute to the substrate site. The active-site Proton acceptor is the H127. D149 contacts Mg(2+). Q272 serves as a coordination point for substrate. D300 is a binding site for Mg(2+). 344–346 (ESQ) contributes to the substrate binding site. D525 and G562 together coordinate ATP. N563 contributes to the Mg(2+) binding site. A substrate-binding site is contributed by S565.

It belongs to the FGAMS family. As to quaternary structure, monomer. Part of the FGAM synthase complex composed of 1 PurL, 1 PurQ and 2 PurS subunits.

The protein localises to the cytoplasm. It carries out the reaction N(2)-formyl-N(1)-(5-phospho-beta-D-ribosyl)glycinamide + L-glutamine + ATP + H2O = 2-formamido-N(1)-(5-O-phospho-beta-D-ribosyl)acetamidine + L-glutamate + ADP + phosphate + H(+). The protein operates within purine metabolism; IMP biosynthesis via de novo pathway; 5-amino-1-(5-phospho-D-ribosyl)imidazole from N(2)-formyl-N(1)-(5-phospho-D-ribosyl)glycinamide: step 1/2. Functionally, part of the phosphoribosylformylglycinamidine synthase complex involved in the purines biosynthetic pathway. Catalyzes the ATP-dependent conversion of formylglycinamide ribonucleotide (FGAR) and glutamine to yield formylglycinamidine ribonucleotide (FGAM) and glutamate. The FGAM synthase complex is composed of three subunits. PurQ produces an ammonia molecule by converting glutamine to glutamate. PurL transfers the ammonia molecule to FGAR to form FGAM in an ATP-dependent manner. PurS interacts with PurQ and PurL and is thought to assist in the transfer of the ammonia molecule from PurQ to PurL. This is Phosphoribosylformylglycinamidine synthase subunit PurL from Agrobacterium fabrum (strain C58 / ATCC 33970) (Agrobacterium tumefaciens (strain C58)).